The following is a 405-amino-acid chain: L-rhamnonate dehydratase (405 aa).

Substrate contacts are provided by His-33 and Arg-59. Residues Asp-226, Glu-252, and Glu-280 each coordinate Mg(2+). His-329 serves as the catalytic Proton acceptor. Residue Glu-349 participates in substrate binding.

This sequence belongs to the mandelate racemase/muconate lactonizing enzyme family. RhamD subfamily. Homooctamer; tetramer of dimers. Mg(2+) serves as cofactor.

The catalysed reaction is L-rhamnonate = 2-dehydro-3-deoxy-L-rhamnonate + H2O. Its function is as follows. Catalyzes the dehydration of L-rhamnonate to 2-keto-3-deoxy-L-rhamnonate (KDR). The polypeptide is L-rhamnonate dehydratase (Escherichia coli O9:H4 (strain HS)).